A 367-amino-acid chain; its full sequence is Gelsolin-like protein 1 (367 aa).

Residues 1-185 are actin binding; the sequence is MATGLIKAKE…GQKQQIYVHE (185 aa). Gelsolin-like repeat units follow at residues 56-141 and 179-225; these read NFKV…ELFR and QQIY…KAMQ. An actin-actin interfilament contact point region spans residues 106–109; it reads DEYG. Residues 186 to 295 form an actin binding, Actin-severing region; the sequence is VPLVKERLDH…LKTTEVKRGA (110 aa). The segment at 235 to 257 is disordered; it reads PKAEAETLEDESTPESHKFYTSL. The stretch at 287–322 is one Gelsolin-like 3 repeat; sequence KTTEVKRGAVNSKDFSSNDVFILDTGDQCFVWVGKG. The interval 296–366 is actin-severing, Ca-sensitive; it reads VNSKDFSSND…LCKAFNVAIA (71 aa).

Belongs to the villin/gelsolin family. In terms of assembly, interacts with actin monomers and filaments. In terms of tissue distribution, expressed in circular and longitudinal muscle, pseudohearts, pharynx and gizzard. Also expressed in male germ cells at the proximal pole of primary spermatocytes in 16 cell-stage morulae, and in the distal parts of the spermatocytes in 32 and 64 cell-stage morulae. In the spermatids of the 128 cell-stage morulae it is expressed at the proximal pole of the elongated nucleus and the distal pole near the base of the flagellae.

The protein resides in the cytoplasm. It is found in the cytoskeleton. In terms of biological role, calcium-regulated protein that binds to the plus (or barbed) ends of actin monomers or filaments, preventing monomer exchange (end-blocking or capping). Can promote the assembly of monomers into filaments (nucleation) as well as sever existing filaments. The protein is Gelsolin-like protein 1 of Lumbricus terrestris (Common earthworm).